The primary structure comprises 151 residues: Probable cGMP 3',5'-cyclic phosphodiesterase subunit delta (151 aa).

This sequence belongs to the PDE6D/unc-119 family. In terms of assembly, interacts with Pde6.

It is found in the nucleus. The protein resides in the cytoplasm. The polypeptide is Probable cGMP 3',5'-cyclic phosphodiesterase subunit delta (Drosophila willistoni (Fruit fly)).